The following is a 739-amino-acid chain: Catalase-peroxidase 2 (739 aa).

The first 26 residues, Met-1–Ala-26, serve as a signal peptide directing secretion. The segment at residues Trp-105–Tyr-227 is a cross-link (tryptophyl-tyrosyl-methioninium (Trp-Tyr) (with M-253)). His-106 serves as the catalytic Proton acceptor. The segment at residues Tyr-227–Met-253 is a cross-link (tryptophyl-tyrosyl-methioninium (Tyr-Met) (with W-105)). His-268 lines the heme b pocket.

This sequence belongs to the peroxidase family. Peroxidase/catalase subfamily. As to quaternary structure, homodimer or homotetramer. Requires heme b as cofactor. Post-translationally, formation of the three residue Trp-Tyr-Met cross-link is important for the catalase, but not the peroxidase activity of the enzyme.

The catalysed reaction is H2O2 + AH2 = A + 2 H2O. The enzyme catalyses 2 H2O2 = O2 + 2 H2O. Bifunctional enzyme with both catalase and broad-spectrum peroxidase activity. This is Catalase-peroxidase 2 from Shewanella sp. (strain ANA-3).